A 292-amino-acid polypeptide reads, in one-letter code: MELLCCEGTRHAPRAGPDPRLLGDQRVLQSLLRLEERYVPRASYFQCVQKEIKPHMRKMLAYWMLEVCEEQRCEEDVFPLAMNYLDRYLSCVPTRKAQLQLLGTVCLLLASKLRETTPLTIEKLCIYTDQAVAPWQLREWEVLVLGKLKWDLAAVIAHDFLALILHRLSLPSDRQALVKKHAQTFLALCATDYTFAMYPPSMIATGSIGAAVLGLGACSMSADELTELLAGITGTEVDCLRACQEQIEAALRESLREAAQTAPSPVPKAPRGSSSQGPSQTSTPTDVTAIHL.

The 126-residue stretch at 27-152 (VLQSLLRLEE…LVLGKLKWDL (126 aa)) folds into the Cyclin N-terminal domain. The disordered stretch occupies residues 256-292 (REAAQTAPSPVPKAPRGSSSQGPSQTSTPTDVTAIHL). Residues Ser264 and Ser279 each carry the phosphoserine modification. Residues 272–285 (GSSSQGPSQTSTPT) are compositionally biased toward low complexity. Residue Thr283 is modified to Phosphothreonine.

This sequence belongs to the cyclin family. Cyclin D subfamily. In terms of assembly, interacts with the CDK4 and CDK6 protein kinases to form a serine/threonine kinase holoenzyme complex. The cyclin subunit imparts substrate specificity to the complex. Interacts with ATF5. Interacts with EIF3K. Component of the ternary complex cyclin D/CDK4/CDKN1B required for nuclear translocation and modulation of CDK4-mediated kinase activity. Can form similar complexes with either CDKN1A or CDKN2A. In terms of processing, phosphorylation at Thr-283 by MAP kinases is required for ubiquitination and degradation by the DCX(AMBRA1) complex. Ubiquitinated by the DCX(AMBRA1) complex during the transition from G1 to S cell phase, leading to its degradation: ubiquitination is dependent on Thr-283 phosphorylation. The DCX(AMBRA1) complex represents the major regulator of CCND3 stability during the G1/S transition. Polyubiquitinated by the SCF(FBXL2) complex, leading to proteasomal degradation.

It is found in the nucleus. The protein localises to the cytoplasm. Functionally, regulatory component of the cyclin D3-CDK4 (DC) complex that phosphorylates and inhibits members of the retinoblastoma (RB) protein family including RB1 and regulates the cell-cycle during G(1)/S transition. Phosphorylation of RB1 allows dissociation of the transcription factor E2F from the RB/E2F complex and the subsequent transcription of E2F target genes which are responsible for the progression through the G(1) phase. Hypophosphorylates RB1 in early G(1) phase. Cyclin D-CDK4 complexes are major integrators of various mitogenenic and antimitogenic signals. Component of the ternary complex, cyclin D3/CDK4/CDKN1B, required for nuclear translocation and activity of the cyclin D-CDK4 complex. Shows transcriptional coactivator activity with ATF5 independently of CDK4. The sequence is that of G1/S-specific cyclin-D3 from Mus musculus (Mouse).